The primary structure comprises 295 residues: Protoheme IX farnesyltransferase (295 aa).

9 consecutive transmembrane segments (helical) span residues 24–44 (IMYL…GSMH), 45–65 (PFLA…AGAI), 94–114 (SALE…AIAV), 117–137 (ISAA…TIWL), 144–164 (NIVI…AAVT), 171–191 (SFIL…ALSL), 216–236 (KYIL…ALFL), 240–260 (LLYL…AVSV), and 272–292 (MFSY…FCSI).

Belongs to the UbiA prenyltransferase family. Protoheme IX farnesyltransferase subfamily.

It is found in the cell membrane. It carries out the reaction heme b + (2E,6E)-farnesyl diphosphate + H2O = Fe(II)-heme o + diphosphate. Its pathway is porphyrin-containing compound metabolism; heme O biosynthesis; heme O from protoheme: step 1/1. Its function is as follows. Converts heme B (protoheme IX) to heme O by substitution of the vinyl group on carbon 2 of heme B porphyrin ring with a hydroxyethyl farnesyl side group. The sequence is that of Protoheme IX farnesyltransferase from Wolbachia pipientis wMel.